A 517-amino-acid polypeptide reads, in one-letter code: 2-isopropylmalate synthase (517 aa).

The Pyruvate carboxyltransferase domain maps to 7-269 (VIIFDTTLRD…ETGIDTTQIV (263 aa)). The Mn(2+) site is built by Asp16, His204, His206, and Asn240. The interval 366 to 517 (LADKKREIFD…KPKAQGSGTI (152 aa)) is required for the condensation reaction. Not required to bind substrate. Residues 395 to 517 (KFISQKISTE…KPKAQGSGTI (123 aa)) form a regulatory domain region.

It belongs to the alpha-IPM synthase/homocitrate synthase family. LeuA type 1 subfamily. Homodimer. Remains a homodimer in the presence of L-leucine. Requires Mn(2+) as cofactor.

It localises to the cytoplasm. It carries out the reaction 3-methyl-2-oxobutanoate + acetyl-CoA + H2O = (2S)-2-isopropylmalate + CoA + H(+). It participates in amino-acid biosynthesis; L-leucine biosynthesis; L-leucine from 3-methyl-2-oxobutanoate: step 1/4. Its activity is regulated as follows. Inhibited by 3-bromo substituents and Leu, the pathway end product. Its function is as follows. Catalyzes the condensation of the acetyl group of acetyl-CoA with 3-methyl-2-oxobutanoate (2-ketoisovalerate) to form 3-carboxy-3-hydroxy-4-methylpentanoate (2-isopropylmalate). Complements an E.coli deletion. This chain is 2-isopropylmalate synthase, found in Neisseria meningitidis serogroup B (strain ATCC BAA-335 / MC58).